Reading from the N-terminus, the 352-residue chain is 3-isopropylmalate dehydrogenase (352 aa).

Gly-71–Glu-87 is an NAD(+) binding site. Positions 94, 104, 132, and 218 each coordinate substrate. Mg(2+) is bound by residues Asp-218, Asp-242, and Asp-246. Gly-275 to Asn-287 provides a ligand contact to NAD(+).

The protein belongs to the isocitrate and isopropylmalate dehydrogenases family. LeuB type 1 subfamily. As to quaternary structure, homodimer. Mg(2+) is required as a cofactor. It depends on Mn(2+) as a cofactor.

Its subcellular location is the cytoplasm. It catalyses the reaction (2R,3S)-3-isopropylmalate + NAD(+) = 4-methyl-2-oxopentanoate + CO2 + NADH. It participates in amino-acid biosynthesis; L-leucine biosynthesis; L-leucine from 3-methyl-2-oxobutanoate: step 3/4. In terms of biological role, catalyzes the oxidation of 3-carboxy-2-hydroxy-4-methylpentanoate (3-isopropylmalate) to 3-carboxy-4-methyl-2-oxopentanoate. The product decarboxylates to 4-methyl-2 oxopentanoate. The polypeptide is 3-isopropylmalate dehydrogenase (Deinococcus radiodurans (strain ATCC 13939 / DSM 20539 / JCM 16871 / CCUG 27074 / LMG 4051 / NBRC 15346 / NCIMB 9279 / VKM B-1422 / R1)).